The primary structure comprises 164 residues: FMN reductase (NADH) RutF (164 aa).

This sequence belongs to the non-flavoprotein flavin reductase family. RutF subfamily.

It catalyses the reaction FMNH2 + NAD(+) = FMN + NADH + 2 H(+). Its function is as follows. Catalyzes the reduction of FMN to FMNH2 which is used to reduce pyrimidine by RutA via the Rut pathway. This Escherichia coli (strain K12 / MC4100 / BW2952) protein is FMN reductase (NADH) RutF.